We begin with the raw amino-acid sequence, 176 residues long: NADH-quinone oxidoreductase subunit I 1 (176 aa).

4Fe-4S ferredoxin-type domains are found at residues Ile-45–Thr-77 and Arg-87–Asp-116. [4Fe-4S] cluster is bound by residues Cys-57, Cys-60, Cys-63, Cys-67, Cys-96, Cys-99, Cys-102, and Cys-106.

The protein belongs to the complex I 23 kDa subunit family. NDH-1 is composed of 14 different subunits. Subunits NuoA, H, J, K, L, M, N constitute the membrane sector of the complex. [4Fe-4S] cluster serves as cofactor.

It is found in the cell inner membrane. The enzyme catalyses a quinone + NADH + 5 H(+)(in) = a quinol + NAD(+) + 4 H(+)(out). Its function is as follows. NDH-1 shuttles electrons from NADH, via FMN and iron-sulfur (Fe-S) centers, to quinones in the respiratory chain. The immediate electron acceptor for the enzyme in this species is believed to be ubiquinone. Couples the redox reaction to proton translocation (for every two electrons transferred, four hydrogen ions are translocated across the cytoplasmic membrane), and thus conserves the redox energy in a proton gradient. The polypeptide is NADH-quinone oxidoreductase subunit I 1 (Geobacter metallireducens (strain ATCC 53774 / DSM 7210 / GS-15)).